A 234-amino-acid chain; its full sequence is Sugar fermentation stimulation protein A (234 aa).

The H-T-H motif DNA-binding region spans 201 to 220 (LLSEAQQRGVEILAYKAEIS).

The protein belongs to the SfsA family.

In terms of biological role, binds to DNA non-specifically. Could be a regulatory factor involved in maltose metabolism. The sequence is that of Sugar fermentation stimulation protein A from Escherichia coli (strain 55989 / EAEC).